The following is an 89-amino-acid chain: Small ribosomal subunit protein uS17 (89 aa).

It belongs to the universal ribosomal protein uS17 family. In terms of assembly, part of the 30S ribosomal subunit.

Its function is as follows. One of the primary rRNA binding proteins, it binds specifically to the 5'-end of 16S ribosomal RNA. The chain is Small ribosomal subunit protein uS17 from Polaromonas sp. (strain JS666 / ATCC BAA-500).